Consider the following 381-residue polypeptide: PqqA peptide cyclase (381 aa).

Residues 12–228 (VGPPLWLLAE…AEYRQRLAAE (217 aa)) enclose the Radical SAM core domain. Positions 26, 30, and 33 each coordinate [4Fe-4S] cluster.

This sequence belongs to the radical SAM superfamily. PqqE family. In terms of assembly, interacts with PqqD. The interaction is necessary for activity of PqqE. The cofactor is [4Fe-4S] cluster.

The enzyme catalyses [PQQ precursor protein] + S-adenosyl-L-methionine = E-Y cross-linked-[PQQ precursor protein] + 5'-deoxyadenosine + L-methionine + H(+). The protein operates within cofactor biosynthesis; pyrroloquinoline quinone biosynthesis. Functionally, catalyzes the cross-linking of a glutamate residue and a tyrosine residue in the PqqA protein as part of the biosynthesis of pyrroloquinoline quinone (PQQ). This chain is PqqA peptide cyclase, found in Pseudomonas aeruginosa (strain LESB58).